Consider the following 723-residue polypeptide: Transient receptor potential cation channel subfamily V member 5 (723 aa).

Residues 1-320 (MGVKKPWIQL…SLKWKKYGQP (320 aa)) are Cytoplasmic-facing. ANK repeat units lie at residues 72 to 101 (LGETALHVAALYDNLDAAIMLMETAPYLVT), 110 to 139 (VGQTALHIAIMNQNVNLVRALLARGASASA), 156 to 185 (YGEHPLSFAACVGSEEIVRLLIEHGADIRA), 189 to 222 (LGNTVLHILVLQPNKTFACQMYNLLLSHDGGDHL), and 232 to 261 (QGLTPFKLAGVEGNTVMFQHLMQKRKHIQW). A helical membrane pass occupies residues 321–341 (YFCLLGMLYIFYMICFTTCCV). Residues 342–378 (YRPLKFRDANRTHVRDNTVLEQKPLQEAYVTYQDKVR) lie on the Extracellular side of the membrane. N351 carries an N-linked (GlcNAc...) asparagine glycan. A helical transmembrane segment spans residues 379-401 (LVGELVTVIGAVVILLIEIPDIF). The Cytoplasmic segment spans residues 402-412 (RVGASRYFGHT). A helical membrane pass occupies residues 413–435 (VLGGPFHVIIITYASLVLLIMVM). At 436 to 441 (RLTSMN) the chain is on the extracellular side. The helical transmembrane segment at 442 to 462 (GEVVPISMALVLGWCSVMYFS) threads the bilayer. Over 463 to 485 (RGFQMLGPFTIMIQKMIFGDLLR) the chain is Cytoplasmic. The helical transmembrane segment at 486 to 506 (FCWLMAMVILGFASAFYIIFQ) threads the bilayer. The pore-forming intramembrane region spans 517–537 (SDYPTAMFSTFELFLTIIDGP). Ca(2+) is bound at residue D535. The helical transmembrane segment at 550–570 (LTYFAFAIIATLLMLNLFIAM) threads the bilayer. The Cytoplasmic segment spans residues 571–723 (MGDTHWRVAQ…EGDGEEIYHF (153 aa)). Residues 591-595 (VATTV) form an interaction with S100A10 region. Positions 643-646 (AFKS) are involved in Ca(2+)-dependent inactivation. Positions 651 to 674 (EVQEQLSEKQPSGTETGTLARGSV) are disordered. Residues 654-667 (EQLSEKQPSGTETG) show a composition bias toward polar residues. Residue T678 is modified to Phosphothreonine. S682 bears the Phosphoserine mark. An involved in Ca(2+)-dependent inactivation region spans residues 693–723 (RGWEILRRNTLGHLNLGQDLGEGDGEEIYHF).

The protein belongs to the transient receptor (TC 1.A.4) family. TrpV subfamily. TRPV5 sub-subfamily. Homotetramer and probably heterotetramer with TRPV6. Interacts with TRPV6. Interacts with S100A10 and probably with the ANAX2-S100A10 heterotetramer. The interaction with S100A10 is required for the trafficking to the plasma membrane. Interacts with calmodulin. Interacts with BSPRY, which results in its inactivation. In terms of processing, glycosylated. As to expression, detected in kidney (at protein level). Detected in kidney.

The protein localises to the cell membrane. It is found in the apical cell membrane. It catalyses the reaction Ca(2+)(in) = Ca(2+)(out). Its activity is regulated as follows. Activated by WNK3. Its function is as follows. Constitutively active calcium selective cation channel thought to be involved in Ca(2+) reabsorption in kidney and intestine. Required for normal Ca(2+) reabsorption in the kidney distal convoluted tubules. The channel is activated by low internal calcium level and the current exhibits an inward rectification. A Ca(2+)-dependent feedback regulation includes fast channel inactivation and slow current decay. Heteromeric assembly with TRPV6 seems to modify channel properties. TRPV5-TRPV6 heteromultimeric concatemers exhibit voltage-dependent gating. The chain is Transient receptor potential cation channel subfamily V member 5 (Trpv5) from Rattus norvegicus (Rat).